We begin with the raw amino-acid sequence, 149 residues long: Flagellar assembly factor FliW (149 aa).

Belongs to the FliW family. As to quaternary structure, interacts with translational regulator CsrA and flagellin(s).

The protein localises to the cytoplasm. Its function is as follows. Acts as an anti-CsrA protein, binds CsrA and prevents it from repressing translation of its target genes, one of which is flagellin. Binds to flagellin and participates in the assembly of the flagellum. The chain is Flagellar assembly factor FliW from Thermotoga petrophila (strain ATCC BAA-488 / DSM 13995 / JCM 10881 / RKU-1).